Consider the following 178-residue polypeptide: Imidazoleglycerol-phosphate dehydratase (178 aa).

This sequence belongs to the imidazoleglycerol-phosphate dehydratase family.

Its subcellular location is the cytoplasm. It carries out the reaction D-erythro-1-(imidazol-4-yl)glycerol 3-phosphate = 3-(imidazol-4-yl)-2-oxopropyl phosphate + H2O. It functions in the pathway amino-acid biosynthesis; L-histidine biosynthesis; L-histidine from 5-phospho-alpha-D-ribose 1-diphosphate: step 6/9. This chain is Imidazoleglycerol-phosphate dehydratase, found in Archaeoglobus fulgidus (strain ATCC 49558 / DSM 4304 / JCM 9628 / NBRC 100126 / VC-16).